The sequence spans 425 residues: Serine--tRNA ligase (425 aa).

Residue 231 to 233 (TAE) coordinates L-serine. 262-264 (RRE) provides a ligand contact to ATP. E285 provides a ligand contact to L-serine. 349–352 (EISS) contributes to the ATP binding site. S385 provides a ligand contact to L-serine.

Belongs to the class-II aminoacyl-tRNA synthetase family. Type-1 seryl-tRNA synthetase subfamily. In terms of assembly, homodimer. The tRNA molecule binds across the dimer.

Its subcellular location is the cytoplasm. The enzyme catalyses tRNA(Ser) + L-serine + ATP = L-seryl-tRNA(Ser) + AMP + diphosphate + H(+). The catalysed reaction is tRNA(Sec) + L-serine + ATP = L-seryl-tRNA(Sec) + AMP + diphosphate + H(+). Its pathway is aminoacyl-tRNA biosynthesis; selenocysteinyl-tRNA(Sec) biosynthesis; L-seryl-tRNA(Sec) from L-serine and tRNA(Sec): step 1/1. In terms of biological role, catalyzes the attachment of serine to tRNA(Ser). Is also able to aminoacylate tRNA(Sec) with serine, to form the misacylated tRNA L-seryl-tRNA(Sec), which will be further converted into selenocysteinyl-tRNA(Sec). This Aquifex aeolicus (strain VF5) protein is Serine--tRNA ligase.